Reading from the N-terminus, the 154-residue chain is Prefoldin subunit alpha (154 aa).

Positions 123-154 (EAEQLEQQAQQAQQQMMQQQMQAQQQPQDGEQ) are disordered. A compositionally biased stretch (low complexity) spans 127–154 (LEQQAQQAQQQMMQQQMQAQQQPQDGEQ).

Belongs to the prefoldin alpha subunit family. Heterohexamer of two alpha and four beta subunits.

The protein localises to the cytoplasm. Its function is as follows. Molecular chaperone capable of stabilizing a range of proteins. Seems to fulfill an ATP-independent, HSP70-like function in archaeal de novo protein folding. This Halobacterium salinarum (strain ATCC 29341 / DSM 671 / R1) protein is Prefoldin subunit alpha.